A 296-amino-acid polypeptide reads, in one-letter code: 4-diphosphocytidyl-2-C-methyl-D-erythritol kinase (296 aa).

Lysine 19 is a catalytic residue. 102 to 112 contributes to the ATP binding site; it reads PMGAGLGGGSS. Aspartate 144 is an active-site residue.

The protein belongs to the GHMP kinase family. IspE subfamily.

It carries out the reaction 4-CDP-2-C-methyl-D-erythritol + ATP = 4-CDP-2-C-methyl-D-erythritol 2-phosphate + ADP + H(+). It participates in isoprenoid biosynthesis; isopentenyl diphosphate biosynthesis via DXP pathway; isopentenyl diphosphate from 1-deoxy-D-xylulose 5-phosphate: step 3/6. In terms of biological role, catalyzes the phosphorylation of the position 2 hydroxy group of 4-diphosphocytidyl-2C-methyl-D-erythritol. The protein is 4-diphosphocytidyl-2-C-methyl-D-erythritol kinase of Burkholderia pseudomallei (strain 1710b).